The following is a 210-amino-acid chain: Syntaxin-binding protein 6 (210 aa).

Ser2 is modified (N-acetylserine). Residues 151-210 (GNSILHSAADSVTSAVQKASQALNERGERLGRAEEKTEDMKNSAQQFAETAHKLAMKHKC) form the v-SNARE coiled-coil homology domain.

As to quaternary structure, part of a ternary complex containing SNAP25 and STX1A that can be dissociated by NAPA and NSF. Interacts with STX4A.

The protein resides in the cytoplasm. It localises to the membrane. In terms of biological role, forms non-fusogenic complexes with SNAP25 and STX1A and may thereby modulate the formation of functional SNARE complexes and exocytosis. In Mus musculus (Mouse), this protein is Syntaxin-binding protein 6 (Stxbp6).